A 132-amino-acid polypeptide reads, in one-letter code: Lectin OAA (132 aa).

Repeat copies occupy residues 1-66 and 67-132. The interval 1 to 132 is 2 X approximate tandem repeats; the sequence is ALYNVENQWG…GPIGFKGTTL (132 aa).

Monomer.

In terms of biological role, lectin specific for high mannose N-glycans, recognizes the branched moiety of these glycans. Does not recognize other types of N-glycans or monosaccharides. Agglutinates trypsin-treated rabbit erythrocytes. Does not require divalent cations for activity. Inhibits HIV replication in MT4 cells with an EC(50) of 45 nM. Binds to the HIV envelope glycoprotein gp120. The chain is Lectin OAA from Planktothrix agardhii (Oscillatoria agardhii).